Consider the following 380-residue polypeptide: 3-dehydroquinate synthase (380 aa).

Residues 100–104 (GAASD), 124–125 (TT), K137, and K146 each bind NAD(+). Positions 179, 251, and 267 each coordinate Zn(2+). Residues 320–343 (YMQRDKKNMQSNDTDSDKDSREMP) form a disordered region.

Belongs to the sugar phosphate cyclases superfamily. Dehydroquinate synthase family. It depends on NAD(+) as a cofactor. Requires Co(2+) as cofactor. Zn(2+) serves as cofactor.

Its subcellular location is the cytoplasm. It catalyses the reaction 7-phospho-2-dehydro-3-deoxy-D-arabino-heptonate = 3-dehydroquinate + phosphate. It functions in the pathway metabolic intermediate biosynthesis; chorismate biosynthesis; chorismate from D-erythrose 4-phosphate and phosphoenolpyruvate: step 2/7. Its function is as follows. Catalyzes the conversion of 3-deoxy-D-arabino-heptulosonate 7-phosphate (DAHP) to dehydroquinate (DHQ). In Tropheryma whipplei (strain Twist) (Whipple's bacillus), this protein is 3-dehydroquinate synthase.